The primary structure comprises 1093 residues: Carbamoyl phosphate synthase large chain (1093 aa).

Positions 1–412 (MPRRNDIRKI…SLMKALRSLE (412 aa)) are carboxyphosphate synthetic domain. 12 residues coordinate ATP: Arg-139, Arg-179, Gly-185, Gly-186, Glu-218, Val-220, Glu-225, Gly-251, Val-252, His-253, Gln-295, and Glu-309. Residues 143-338 (KDAMTRIGLD…IAKIAAKLAV (196 aa)) form the ATP-grasp 1 domain. Gln-295, Glu-309, and Asn-311 together coordinate Mg(2+). Mn(2+) is bound by residues Gln-295, Glu-309, and Asn-311. The tract at residues 413-560 (TGKRVGAEVL…YSSYEEEDEA (148 aa)) is oligomerization domain. Residues 561-952 (PQTDKRKVII…AFAKAQLSAG (392 aa)) form a carbamoyl phosphate synthetic domain region. Residues 689-880 (GKLLEQLQIP…LAKIASRLMT (192 aa)) form the ATP-grasp 2 domain. ATP contacts are provided by Arg-725, His-764, Leu-766, Glu-771, Gly-796, Ile-797, His-798, Ser-799, Gln-839, and Glu-851. Positions 839, 851, and 853 each coordinate Mg(2+). Residues Gln-839, Glu-851, and Asn-853 each contribute to the Mn(2+) site. Positions 953–1093 (LILPSSGTVF…QLLHAGHAVK (141 aa)) constitute an MGS-like domain. An allosteric domain region spans residues 953 to 1093 (LILPSSGTVF…QLLHAGHAVK (141 aa)).

The protein belongs to the CarB family. In terms of assembly, composed of two chains; the small (or glutamine) chain promotes the hydrolysis of glutamine to ammonia, which is used by the large (or ammonia) chain to synthesize carbamoyl phosphate. Tetramer of heterodimers (alpha,beta)4. The cofactor is Mg(2+). Mn(2+) serves as cofactor.

It catalyses the reaction hydrogencarbonate + L-glutamine + 2 ATP + H2O = carbamoyl phosphate + L-glutamate + 2 ADP + phosphate + 2 H(+). It carries out the reaction hydrogencarbonate + NH4(+) + 2 ATP = carbamoyl phosphate + 2 ADP + phosphate + 2 H(+). Its pathway is amino-acid biosynthesis; L-arginine biosynthesis; carbamoyl phosphate from bicarbonate: step 1/1. The protein operates within pyrimidine metabolism; UMP biosynthesis via de novo pathway; (S)-dihydroorotate from bicarbonate: step 1/3. Functionally, large subunit of the glutamine-dependent carbamoyl phosphate synthetase (CPSase). CPSase catalyzes the formation of carbamoyl phosphate from the ammonia moiety of glutamine, carbonate, and phosphate donated by ATP, constituting the first step of 2 biosynthetic pathways, one leading to arginine and/or urea and the other to pyrimidine nucleotides. The large subunit (synthetase) binds the substrates ammonia (free or transferred from glutamine from the small subunit), hydrogencarbonate and ATP and carries out an ATP-coupled ligase reaction, activating hydrogencarbonate by forming carboxy phosphate which reacts with ammonia to form carbamoyl phosphate. This chain is Carbamoyl phosphate synthase large chain, found in Acidobacterium capsulatum (strain ATCC 51196 / DSM 11244 / BCRC 80197 / JCM 7670 / NBRC 15755 / NCIMB 13165 / 161).